The primary structure comprises 2197 residues: RNA1 polyprotein (2197 aa).

Residues 621–1167 (GLTDVFGVPL…YDWVYANGGK (547 aa)) lie on the Cytoplasmic side of the membrane. The SF3 helicase domain occupies 766 to 933 (VKRLSDLHKR…EGVAYNPSDP (168 aa)). 796-803 (GGPRCGKS) is a binding site for ATP. A helical transmembrane segment spans residues 1168–1188 (LLLVLAAVILILFFGSACIKL). The Lumenal segment spans residues 1189–1212 (MQAIFCGAAGGTVSMAAVGKMTVQ). Asn1228 carries N-linked (GlcNAc...) asparagine; by host glycosylation. One can recognise a Peptidase C3 domain in the interval 1243–1475 (LAEAQFNESH…MPRYISHASF (233 aa)). Residues His1283, Glu1331, and Cys1433 each act as for picornain 3C-like protease activity in the active site. One can recognise a RdRp catalytic domain in the interval 1765–1888 (SVALNCDYSR…SIKPDTMKYF (124 aa)).

It belongs to the nepoviruses RNA1 polyprotein family. Post-translationally, specific enzymatic cleavages by picornain 3C-like protease in vivo yield mature proteins. Picornain 3C-like protease is autocatalytically processed. NTB exists as NTB-VPg polyprotein as well as NTB mature protein. In terms of processing, VPg is uridylylated by the polymerase and is covalently linked to the 5'-end of genomic RNA. This uridylylated form acts as a nucleotide-peptide primer for the polymerase.

The protein localises to the host endoplasmic reticulum lumen. The protein resides in the host endoplasmic reticulum membrane. The enzyme catalyses RNA(n) + a ribonucleoside 5'-triphosphate = RNA(n+1) + diphosphate. Its function is as follows. Picornain 3C-like protease is a thiol protease that cleaves at Gln-|-Gly or Gln-|-Ser sites in the P1 and P2 polyproteins. The VPg-NTB polyprotein may act as a membrane-anchor for the replication complex. This Tomato ringspot virus (isolate raspberry) (ToRSV) protein is RNA1 polyprotein.